Reading from the N-terminus, the 362-residue chain is Phosphoglycolate phosphatase 1B, chloroplastic (362 aa).

The N-terminal 54 residues, methionine 1–methionine 54, are a transit peptide targeting the chloroplast. The residue at position 55 (threonine 55) is an N-acetylthreonine. Catalysis depends on glutamate 80, which acts as the Nucleophile. Phosphoserine is present on serine 356.

The protein belongs to the HAD-like hydrolase superfamily. CbbY/CbbZ/Gph/YieH family.

It localises to the plastid. The protein localises to the chloroplast. It catalyses the reaction 2-phosphoglycolate + H2O = glycolate + phosphate. Functionally, photorespiratory enzyme that dephosphorylates the 2-phosphoglycolate produced by the RuBisCO oxygenation reaction. This Arabidopsis thaliana (Mouse-ear cress) protein is Phosphoglycolate phosphatase 1B, chloroplastic (PGLP1B).